The sequence spans 401 residues: Beta-ketoadipyl-CoA thiolase (401 aa).

Catalysis depends on Cys-90, which acts as the Acyl-thioester intermediate. Residues His-357 and Cys-387 each act as proton acceptor in the active site.

This sequence belongs to the thiolase-like superfamily. Thiolase family.

It catalyses the reaction succinyl-CoA + acetyl-CoA = 3-oxoadipyl-CoA + CoA. It participates in aromatic compound metabolism; beta-ketoadipate pathway; acetyl-CoA and succinyl-CoA from 3-oxoadipate: step 2/2. Catalyzes thiolytic cleavage of beta-ketoadipyl-CoA to succinyl-CoA and acetyl-CoA. The chain is Beta-ketoadipyl-CoA thiolase (catF) from Acinetobacter baylyi (strain ATCC 33305 / BD413 / ADP1).